The following is a 184-amino-acid chain: ATP synthase subunit b, chloroplastic (184 aa).

The helical transmembrane segment at 29–49 (TNLINLGVVLGLLVYFGKGVL) threads the bilayer.

It belongs to the ATPase B chain family. In terms of assembly, F-type ATPases have 2 components, F(1) - the catalytic core - and F(0) - the membrane proton channel. F(1) has five subunits: alpha(3), beta(3), gamma(1), delta(1), epsilon(1). F(0) has four main subunits: a(1), b(1), b'(1) and c(10-14). The alpha and beta chains form an alternating ring which encloses part of the gamma chain. F(1) is attached to F(0) by a central stalk formed by the gamma and epsilon chains, while a peripheral stalk is formed by the delta, b and b' chains.

It localises to the plastid. The protein localises to the chloroplast thylakoid membrane. In terms of biological role, f(1)F(0) ATP synthase produces ATP from ADP in the presence of a proton or sodium gradient. F-type ATPases consist of two structural domains, F(1) containing the extramembraneous catalytic core and F(0) containing the membrane proton channel, linked together by a central stalk and a peripheral stalk. During catalysis, ATP synthesis in the catalytic domain of F(1) is coupled via a rotary mechanism of the central stalk subunits to proton translocation. Component of the F(0) channel, it forms part of the peripheral stalk, linking F(1) to F(0). The protein is ATP synthase subunit b, chloroplastic of Anthoceros angustus (Hornwort).